A 359-amino-acid polypeptide reads, in one-letter code: TGACG-sequence-specific DNA-binding protein TGA-1A (359 aa).

The span at 44-54 (KRLDNETEDTS) shows a compositional bias: basic and acidic residues. The disordered stretch occupies residues 44-72 (KRLDNETEDTSHGTVGTSNRYEPETSKPV). A bZIP domain is found at 72 to 135 (VEKVLRRLAQ…GGVDASQLSY (64 aa)). The stretch at 73–125 (EKVLRRLAQNREAARKSRLRKKAYVQQLENSKLKLIQLEQELERARKQGMCVG) forms a coiled coil. Residues 74–94 (KVLRRLAQNREAARKSRLRKK) form a basic motif region. The segment at 100–114 (LENSKLKLIQLEQEL) is leucine-zipper. In terms of domain architecture, DOG1 spans 143 to 354 (TAVFDMEYGH…RVLSSQWATR (212 aa)).

It belongs to the bZIP family. Binds DNA as a dimer.

It is found in the nucleus. Its function is as follows. Transcriptional activator that binds specifically to the DNA sequence 5'-TGACG-3'. Recognizes ocs elements like the as-1 motif of the cauliflower mosaic virus 35S promoter. Binding to the as-1-like cis elements mediate auxin- and salicylic acid-inducible transcription. Could also bind to the Hex-motif (5'-TGACGTGG-3') another cis-acting element found in plant histone promoters. This is TGACG-sequence-specific DNA-binding protein TGA-1A (TGA1A) from Nicotiana tabacum (Common tobacco).